A 120-amino-acid chain; its full sequence is Succinate dehydrogenase hydrophobic membrane anchor subunit (120 aa).

At 1–19 the chain is on the cytoplasmic side; sequence MVYDFKAEIVKAKNSGSHH. A helical membrane pass occupies residues 20–40; sequence WLLQRVTGIILALCSIWLIYF. Over 41–62 the chain is Periplasmic; the sequence is TLTNKNNDINIIMWELKKPFNV. A helical membrane pass occupies residues 63–84; sequence VALLITVAISLYHAMLGMRVVI. H75 serves as a coordination point for heme. Residues 85–94 are Cytoplasmic-facing; that stretch reads EDYVSCHKLR. Y87 is an a ubiquinone binding site. A helical transmembrane segment spans residues 95–118; that stretch reads NTLIVIVQLFCIVTIAAFVVAMFY.

In terms of assembly, part of an enzyme complex containing four subunits: a flavoprotein, an iron-sulfur protein, plus two membrane-anchoring proteins, SdhC and SdhD. It depends on heme as a cofactor.

The protein resides in the cell inner membrane. It participates in carbohydrate metabolism; tricarboxylic acid cycle. Its function is as follows. Membrane-anchoring subunit of succinate dehydrogenase (SDH). The chain is Succinate dehydrogenase hydrophobic membrane anchor subunit (sdhD) from Rickettsia felis (strain ATCC VR-1525 / URRWXCal2) (Rickettsia azadi).